The following is a 522-amino-acid chain: Endochitinase 11 (522 aa).

Positions 1 to 24 (MLFSMVMFTERWWVGSKDCPRVPA) are cleaved as a signal peptide. Residues Asn148 and Asn275 are each glycosylated (N-linked (GlcNAc...) asparagine). In terms of domain architecture, GH18 spans 235 to 522 (KHVYAPYVDF…ALTCLRNSTA (288 aa)). Glu346 serves as the catalytic Proton donor. N-linked (GlcNAc...) asparagine glycosylation is found at Asn455 and Asn519.

The protein belongs to the glycosyl hydrolase 18 family. Chitinase class V subfamily.

Its subcellular location is the secreted. The enzyme catalyses Random endo-hydrolysis of N-acetyl-beta-D-glucosaminide (1-&gt;4)-beta-linkages in chitin and chitodextrins.. Functionally, secreted chitinase involved in the degradation of chitin, a component of the cell walls of fungi and exoskeletal elements of some animals (including worms and arthropods). Participates in the infection process and directly acts in the penetration process of the host cuticle. The polypeptide is Endochitinase 11 (chi11) (Metarhizium anisopliae (Entomophthora anisopliae)).